A 321-amino-acid chain; its full sequence is Lipoyl synthase (321 aa).

Cys-68, Cys-73, Cys-79, Cys-94, Cys-98, Cys-101, and Ser-308 together coordinate [4Fe-4S] cluster. Residues 80 to 297 enclose the Radical SAM core domain; it reads FNHGTATFMI…KAEALAMGFT (218 aa).

The protein belongs to the radical SAM superfamily. Lipoyl synthase family. [4Fe-4S] cluster serves as cofactor.

The protein resides in the cytoplasm. It catalyses the reaction [[Fe-S] cluster scaffold protein carrying a second [4Fe-4S](2+) cluster] + N(6)-octanoyl-L-lysyl-[protein] + 2 oxidized [2Fe-2S]-[ferredoxin] + 2 S-adenosyl-L-methionine + 4 H(+) = [[Fe-S] cluster scaffold protein] + N(6)-[(R)-dihydrolipoyl]-L-lysyl-[protein] + 4 Fe(3+) + 2 hydrogen sulfide + 2 5'-deoxyadenosine + 2 L-methionine + 2 reduced [2Fe-2S]-[ferredoxin]. It participates in protein modification; protein lipoylation via endogenous pathway; protein N(6)-(lipoyl)lysine from octanoyl-[acyl-carrier-protein]: step 2/2. Catalyzes the radical-mediated insertion of two sulfur atoms into the C-6 and C-8 positions of the octanoyl moiety bound to the lipoyl domains of lipoate-dependent enzymes, thereby converting the octanoylated domains into lipoylated derivatives. In Escherichia coli O9:H4 (strain HS), this protein is Lipoyl synthase.